Here is a 295-residue protein sequence, read N- to C-terminus: Ethanolamine ammonia-lyase small subunit (295 aa).

2 residues coordinate adenosylcob(III)alamin: Val208 and Glu229.

It belongs to the EutC family. In terms of assembly, the basic unit is a heterodimer which dimerizes to form tetramers. The heterotetramers trimerize; 6 large subunits form a core ring with 6 small subunits projecting outwards. The cofactor is adenosylcob(III)alamin.

The protein resides in the bacterial microcompartment. The catalysed reaction is ethanolamine = acetaldehyde + NH4(+). The protein operates within amine and polyamine degradation; ethanolamine degradation. Catalyzes the deamination of various vicinal amino-alcohols to oxo compounds. Allows this organism to utilize ethanolamine as the sole source of nitrogen and carbon in the presence of external vitamin B12. The protein is Ethanolamine ammonia-lyase small subunit of Fusobacterium nucleatum subsp. nucleatum (strain ATCC 25586 / DSM 15643 / BCRC 10681 / CIP 101130 / JCM 8532 / KCTC 2640 / LMG 13131 / VPI 4355).